Consider the following 910-residue polypeptide: Inactive disease susceptibility protein LOV1 (910 aa).

Positions 22–60 (ARLNGIGEQVDGLKRQLGRLQSLLKDADAKKHESERVRN) form a coiled coil. The NB-ARC domain occupies 169-461 (EQSVEALAGH…AAEGIITSSD (293 aa)). LRR repeat units lie at residues 584 to 609 (LPLL…IGDL), 610 to 632 (IHLR…LRNL), and 634 to 655 (LLLY…LKEM).

The protein belongs to the disease resistance NB-LRR family. RPP8/HRT subfamily.

The protein is Inactive disease susceptibility protein LOV1 (LOV1) of Arabidopsis thaliana (Mouse-ear cress).